We begin with the raw amino-acid sequence, 210 residues long: Protein GrpE (210 aa).

Disordered regions lie at residues 1 to 40 (MTDD…PDPI) and 191 to 210 (KGGP…EKDA). The span at 11-23 (DATAADAAADATA) shows a compositional bias: low complexity.

It belongs to the GrpE family. Homodimer.

Its subcellular location is the cytoplasm. Its function is as follows. Participates actively in the response to hyperosmotic and heat shock by preventing the aggregation of stress-denatured proteins, in association with DnaK and GrpE. It is the nucleotide exchange factor for DnaK and may function as a thermosensor. Unfolded proteins bind initially to DnaJ; upon interaction with the DnaJ-bound protein, DnaK hydrolyzes its bound ATP, resulting in the formation of a stable complex. GrpE releases ADP from DnaK; ATP binding to DnaK triggers the release of the substrate protein, thus completing the reaction cycle. Several rounds of ATP-dependent interactions between DnaJ, DnaK and GrpE are required for fully efficient folding. The protein is Protein GrpE of Rhizobium johnstonii (strain DSM 114642 / LMG 32736 / 3841) (Rhizobium leguminosarum bv. viciae).